The chain runs to 484 residues: Probable receptor-like protein kinase At5g18500 (484 aa).

The chain crosses the membrane as a helical span at residues 21 to 41 (IIVIVLSAIFVVVLAISLWLT). Positions 72-135 (RVDEVSSSNG…SVSSANPLTA (64 aa)) are disordered. Residues 91–105 (KFGDKEPEKGIKAES) are compositionally biased toward basic and acidic residues. Residues 125–134 (SSVSSANPLT) show a composition bias toward polar residues. Threonine 155 is subject to Phosphothreonine. Residues 166-445 (FSRDNIIGDG…MLESEEYPIA (280 aa)) form the Protein kinase domain. Residues 172–180 (IGDGGYGVV) and lysine 194 each bind ATP. Tyrosine 239 bears the Phosphotyrosine mark. Catalysis depends on aspartate 292, which acts as the Proton acceptor. Serine 296 bears the Phosphoserine mark. Threonine 326 and threonine 331 each carry phosphothreonine. The residue at position 339 (tyrosine 339) is a Phosphotyrosine. The segment at 425–484 (EKRPRMSQVARMLESEEYPIAREDRRRRRSQNGTTRDSDPPRNSTDTDKSEYHDLKPEGG) is disordered. Over residues 460 to 484 (RDSDPPRNSTDTDKSEYHDLKPEGG) the composition is skewed to basic and acidic residues.

The protein belongs to the protein kinase superfamily. Ser/Thr protein kinase family.

The protein resides in the cell membrane. It catalyses the reaction L-seryl-[protein] + ATP = O-phospho-L-seryl-[protein] + ADP + H(+). The enzyme catalyses L-threonyl-[protein] + ATP = O-phospho-L-threonyl-[protein] + ADP + H(+). This is Probable receptor-like protein kinase At5g18500 from Arabidopsis thaliana (Mouse-ear cress).